Here is a 275-residue protein sequence, read N- to C-terminus: Shikimate dehydrogenase (NADP(+)) (275 aa).

Shikimate contacts are provided by residues 17-19 (SKS) and Thr64. Catalysis depends on Lys68, which acts as the Proton acceptor. Glu80 lines the NADP(+) pocket. Shikimate contacts are provided by Asn89 and Asp105. Residues 129–133 (GAGGA), 152–157 (NRTFFK), and Met216 contribute to the NADP(+) site. Shikimate is bound at residue Tyr218. Gly240 lines the NADP(+) pocket.

It belongs to the shikimate dehydrogenase family. In terms of assembly, homodimer.

It catalyses the reaction shikimate + NADP(+) = 3-dehydroshikimate + NADPH + H(+). Its pathway is metabolic intermediate biosynthesis; chorismate biosynthesis; chorismate from D-erythrose 4-phosphate and phosphoenolpyruvate: step 4/7. Its function is as follows. Involved in the biosynthesis of the chorismate, which leads to the biosynthesis of aromatic amino acids. Catalyzes the reversible NADPH linked reduction of 3-dehydroshikimate (DHSA) to yield shikimate (SA). The sequence is that of Shikimate dehydrogenase (NADP(+)) from Pectobacterium atrosepticum (strain SCRI 1043 / ATCC BAA-672) (Erwinia carotovora subsp. atroseptica).